We begin with the raw amino-acid sequence, 283 residues long: Large ribosomal subunit protein uL2 (283 aa).

Disordered stretches follow at residues 1-59 and 222-283; these read MSIK…GGHK and RGVA…TGGQ.

It belongs to the universal ribosomal protein uL2 family. As to quaternary structure, part of the 50S ribosomal subunit. Forms a bridge to the 30S subunit in the 70S ribosome.

Functionally, one of the primary rRNA binding proteins. Required for association of the 30S and 50S subunits to form the 70S ribosome, for tRNA binding and peptide bond formation. It has been suggested to have peptidyltransferase activity; this is somewhat controversial. Makes several contacts with the 16S rRNA in the 70S ribosome. This Salinibacter ruber (strain DSM 13855 / M31) protein is Large ribosomal subunit protein uL2.